The following is a 357-amino-acid chain: MKKILPLVIIAPLLISCSSSKNKAENEAYIKDTNGFDILMGQFAHNIENLWGLNEVLIAGPKDYVKYTDQYETRSHINFDAGTITVETIAGDNPSAHLRQAIISTLLMGNDPGTIDLYSDADYIPISKEPFLYGQVLDNNGEPIRWEWHAAHFADYLLQTRLQTRTTGLRQIWSITIQLVPNHLDKRAHKYLGMVRKASQQYGVDQSLILAIMQTESSFNPYAVSHADALGLMQVVQHSAGRDVFKMKGKWGQPSRSYLFDPENNIDTGTAYLAMLQNSYLGGIVNPTSRRYAVITAYNGGAGSVLRVFSRDQNRAFQIINGMPPDQVYQTLSTQHPSAESRRYLYKVNNLQKNYRR.

A signal peptide spans 1-16 (MKKILPLVIIAPLLIS). A lipid anchor (N-palmitoyl cysteine) is attached at Cys-17. Cys-17 carries S-diacylglycerol cysteine lipidation.

This sequence belongs to the transglycosylase Slt family.

The protein localises to the cell outer membrane. The catalysed reaction is Exolytic cleavage of the (1-&gt;4)-beta-glycosidic linkage between N-acetylmuramic acid (MurNAc) and N-acetylglucosamine (GlcNAc) residues in peptidoglycan, from either the reducing or the non-reducing ends of the peptidoglycan chains, with concomitant formation of a 1,6-anhydrobond in the MurNAc residue.. Its function is as follows. Murein-degrading enzyme. May play a role in recycling of muropeptides during cell elongation and/or cell division. The chain is Membrane-bound lytic murein transglycosylase C from Sodalis glossinidius (strain morsitans).